Here is an 815-residue protein sequence, read N- to C-terminus: (E)-gamma-bisabolene synthase (815 aa).

Mg(2+) is bound by residues aspartate 561, aspartate 565, aspartate 709, and glutamate 717. A DDXXD motif motif is present at residues 561 to 565 (DDMYD).

This sequence belongs to the terpene synthase family. Tpsd subfamily. Requires Mg(2+) as cofactor. The cofactor is Mn(2+).

The protein localises to the cytoplasm. It carries out the reaction (2E,6E)-farnesyl diphosphate = (E)-gamma-bisabolene + diphosphate. The protein operates within terpene metabolism; oleoresin biosynthesis. Involved in defensive oleoresin formation in conifers in response to insect attack or other injury. Involved in sesquiterpene (C15) olefins biosynthesis. Produces mainly (E)-gamma-bisabolene when used with farnesyl diphosphate as substrate. No activity with geranyl diphosphate or geranylgeranyl diphosphate. The sequence is that of (E)-gamma-bisabolene synthase (TPS3) from Pseudotsuga menziesii (Douglas-fir).